The following is a 417-amino-acid chain: MTLAEKILSQKAGRKVEPGEFLLLEPDIALANDITAPLAIKKFKEYGGKKVKYPDRVVLVPDHFTPNKDIKSAMQVKMMREFAREQGIEKFFEIGRMGIEHVLLPEEGIVKSGDLVVGADSHTCTYGALGAFATGVGSTDIAGFYLIGKVWFRVPESIKVTLRGKFKDLVTAKDLVLKLISILGVDGANYKAIEFSGPGVKEISMDGRFTISNMAIEAGGKTGLFPVDEITIAYERERGIEVEEMYPDEDAKYVREVEMDLSELEPQVAYPFLPSNAKDVSEAEKERIKIDQAVIGSCTNGRIEDLRLAAQILKGRTVSPDVRCIIIPGSQKVYKQALKEGLIDIFIDAGCAVSTPTCGPCLGGHMGVLAEGEVAISTTNRNFVGRMGHPNSKVFLASPAVAAASAIKGYIADPRKL.

[4Fe-4S] cluster is bound by residues cysteine 298, cysteine 358, and cysteine 361.

This sequence belongs to the aconitase/IPM isomerase family. LeuC type 2 subfamily. As to quaternary structure, heterodimer of LeuC and LeuD. The cofactor is [4Fe-4S] cluster.

The catalysed reaction is (2R,3S)-3-isopropylmalate = (2S)-2-isopropylmalate. It functions in the pathway amino-acid biosynthesis; L-leucine biosynthesis; L-leucine from 3-methyl-2-oxobutanoate: step 2/4. Its function is as follows. Catalyzes the isomerization between 2-isopropylmalate and 3-isopropylmalate, via the formation of 2-isopropylmaleate. The chain is 3-isopropylmalate dehydratase large subunit 2 from Thermotoga maritima (strain ATCC 43589 / DSM 3109 / JCM 10099 / NBRC 100826 / MSB8).